Here is a 445-residue protein sequence, read N- to C-terminus: Argininosuccinate synthase (445 aa).

ATP-binding positions include 17 to 25 and A43; that span reads AFSGGLDTS. Y99 serves as a coordination point for L-citrulline. G129 and T131 together coordinate ATP. L-aspartate is bound by residues T131, N135, and D136. N135 is an L-citrulline binding site. ATP is bound at residue D136. The L-citrulline site is built by R139 and S192. D194 contributes to the ATP binding site. The L-citrulline site is built by T201, E203, and E280.

Belongs to the argininosuccinate synthase family. Type 2 subfamily. In terms of assembly, homotetramer.

The protein localises to the cytoplasm. It catalyses the reaction L-citrulline + L-aspartate + ATP = 2-(N(omega)-L-arginino)succinate + AMP + diphosphate + H(+). Its pathway is amino-acid biosynthesis; L-arginine biosynthesis; L-arginine from L-ornithine and carbamoyl phosphate: step 2/3. The polypeptide is Argininosuccinate synthase (Burkholderia cenocepacia (strain ATCC BAA-245 / DSM 16553 / LMG 16656 / NCTC 13227 / J2315 / CF5610) (Burkholderia cepacia (strain J2315))).